The primary structure comprises 874 residues: Probable inorganic carbon transporter subunit DabA (874 aa).

The Zn(2+) site is built by C398, D400, H580, and C595.

Belongs to the inorganic carbon transporter (TC 9.A.2) DabA family. Forms a complex with DabB. Zn(2+) is required as a cofactor.

The protein resides in the cell membrane. Its function is as follows. Part of an energy-coupled inorganic carbon pump. This Bacillus cereus (strain AH820) protein is Probable inorganic carbon transporter subunit DabA.